An 84-amino-acid polypeptide reads, in one-letter code: uncharacterized protein (84 aa).

A run of 3 helical transmembrane segments spans residues 8–28 (IYFFTIACIIAVIYCVLVNLL), 30–50 (INVIPVVLAFSLILILTISTI), and 63–83 (VLFMLLVLAFFAYAIYKLYIP).

It localises to the cell membrane. This is an uncharacterized protein from Methanocaldococcus jannaschii (strain ATCC 43067 / DSM 2661 / JAL-1 / JCM 10045 / NBRC 100440) (Methanococcus jannaschii).